The chain runs to 126 residues: Fluoride-specific ion channel FluC (126 aa).

Helical transmembrane passes span 35–55 (WWTL…IGLL), 71–91 (VGML…WLLF), and 101–121 (LYVV…MILI). Na(+) contacts are provided by Gly75 and Thr78.

This sequence belongs to the fluoride channel Fluc/FEX (TC 1.A.43) family.

It is found in the cell inner membrane. It carries out the reaction fluoride(in) = fluoride(out). With respect to regulation, na(+) is not transported, but it plays an essential structural role and its presence is essential for fluoride channel function. Functionally, fluoride-specific ion channel. Important for reducing fluoride concentration in the cell, thus reducing its toxicity. This is Fluoride-specific ion channel FluC from Sphingopyxis alaskensis (strain DSM 13593 / LMG 18877 / RB2256) (Sphingomonas alaskensis).